The primary structure comprises 291 residues: Protease HtpX homolog (291 aa).

Helical transmembrane passes span 4-24 and 38-58; these read IALFLITNLAVMAVLGITASL and LGALLGFAMVMGFGGAFISLL. Position 144 (H144) interacts with Zn(2+). Residue E145 is part of the active site. H148 is a Zn(2+) binding site. Helical transmembrane passes span 159-179 and 197-217; these read LIQGVMNTFVVFLSRAIGYFI and VTTVVLDLLLGLVAAMIVAWF. E222 contributes to the Zn(2+) binding site.

Belongs to the peptidase M48B family. Requires Zn(2+) as cofactor.

It localises to the cell inner membrane. In Leptothrix cholodnii (strain ATCC 51168 / LMG 8142 / SP-6) (Leptothrix discophora (strain SP-6)), this protein is Protease HtpX homolog.